The sequence spans 523 residues: MTPARVVFICCVVLLAAAAAAASSSTAAGITRADFPPEFIFGAGSSAYQVEGAFAEDGRKPSIWDTFSHSGYSVDGATGDVTADQYHKYKEDVKLLQDMGVDAYRMSISWSRLIPDGRGAVNPKGLEYYNNLIDELLSHGIQPHVTIYHFDFPQALQDEYNGILSPRFVEDFTAYADVCFKNFGDRVKHWSTVNEPNIEPIGGYDQGILPPRRCSFPFGVLSCDNGNSTTEPYIVAHHLLLAHSSAVSLYREKYQATQGGQIGLTLLGWWYEPGTQDPEDVAAAARMNDFHIGWYMHPLVYGDYPPVMRKNVGSRLPSFTAEESKRVLESYDFVGFNHYVAIFVRADLSKLDQSLRDYMGDAAVKYDLPFLKSNNEFPLGLTSDFMTSTPWALKKMLNHLQEKYKNPIVMIHENGAAGQPDPSGGNTYDDDFRSQYLQDYIEATLQSIRNGSNVQGYFVWSFLDVFEYLFGYRLRFGLYGVDFASPERTRYQRHSARWYAGFLRGGELRPAAAALAGGGAYSQ.

Residues 1-22 form the signal peptide; that stretch reads MTPARVVFICCVVLLAAAAAAA. Residues glutamine 49, histidine 149, and 194–195 each bind a beta-D-glucoside; that span reads NE. Residue glutamate 195 is the Proton donor of the active site. Cysteine 214 and cysteine 223 are disulfide-bonded. Asparagine 227 carries N-linked (GlcNAc...) asparagine glycosylation. The a beta-D-glucoside site is built by tyrosine 339 and glutamate 413. Residue glutamate 413 is the Nucleophile of the active site. A glycan (N-linked (GlcNAc...) asparagine) is linked at asparagine 450. Residues tryptophan 460, 467–468, and phenylalanine 476 each bind a beta-D-glucoside; that span reads EY.

This sequence belongs to the glycosyl hydrolase 1 family.

It carries out the reaction Hydrolysis of terminal, non-reducing beta-D-glucosyl residues with release of beta-D-glucose.. The chain is Beta-glucosidase 31 (BGLU31) from Oryza sativa subsp. japonica (Rice).